The sequence spans 181 residues: Acireductone dioxygenase (181 aa).

Residues His97, His99, Glu103, and His141 each coordinate Fe(2+). Ni(2+) is bound by residues His97, His99, Glu103, and His141.

It belongs to the acireductone dioxygenase (ARD) family. In terms of assembly, monomer. Requires Fe(2+) as cofactor. The cofactor is Ni(2+).

It catalyses the reaction 1,2-dihydroxy-5-(methylsulfanyl)pent-1-en-3-one + O2 = 3-(methylsulfanyl)propanoate + CO + formate + 2 H(+). The enzyme catalyses 1,2-dihydroxy-5-(methylsulfanyl)pent-1-en-3-one + O2 = 4-methylsulfanyl-2-oxobutanoate + formate + 2 H(+). It participates in amino-acid biosynthesis; L-methionine biosynthesis via salvage pathway; L-methionine from S-methyl-5-thio-alpha-D-ribose 1-phosphate: step 5/6. In terms of biological role, catalyzes 2 different reactions between oxygen and the acireductone 1,2-dihydroxy-3-keto-5-methylthiopentene (DHK-MTPene) depending upon the metal bound in the active site. Fe-containing acireductone dioxygenase (Fe-ARD) produces formate and 2-keto-4-methylthiobutyrate (KMTB), the alpha-ketoacid precursor of methionine in the methionine recycle pathway. Ni-containing acireductone dioxygenase (Ni-ARD) produces methylthiopropionate, carbon monoxide and formate, and does not lie on the methionine recycle pathway. The polypeptide is Acireductone dioxygenase (Pseudomonas aeruginosa (strain UCBPP-PA14)).